The chain runs to 122 residues: Large ribosomal subunit protein uL14 (122 aa).

Belongs to the universal ribosomal protein uL14 family. Part of the 50S ribosomal subunit. Forms a cluster with proteins L3 and L19. In the 70S ribosome, L14 and L19 interact and together make contacts with the 16S rRNA in bridges B5 and B8.

Binds to 23S rRNA. Forms part of two intersubunit bridges in the 70S ribosome. The chain is Large ribosomal subunit protein uL14 from Enterococcus faecalis (strain ATCC 700802 / V583).